A 365-amino-acid polypeptide reads, in one-letter code: Zinc finger TRAF-type-containing protein 1-B (365 aa).

The tract at residues methionine 1–glutamate 56 is disordered. Residues cysteine 72 to arginine 117 form an RING-type; degenerate zinc finger. A TRAF-type zinc finger spans residues cysteine 113–threonine 186.

Belongs to the ZFTRAF1 family. In terms of assembly, interacts with LGALS3.

It localises to the cytoplasm. In Xenopus laevis (African clawed frog), this protein is Zinc finger TRAF-type-containing protein 1-B.